Consider the following 432-residue polypeptide: Transcriptional adapter 3 (432 aa).

Residue Lys21 forms a Glycyl lysine isopeptide (Lys-Gly) (interchain with G-Cter in SUMO2) linkage. Residues 40–69 (IEELDTLQLELETLLSSASRRLRVLEAETQ) are a coiled coil. A disordered region spans residues 87–126 (GRDHELGAPPKHGKPKKQKLEGKAGHGPGPGPGRPKSKNL). Lys129 is covalently cross-linked (Glycyl lysine isopeptide (Lys-Gly) (interchain with G-Cter in SUMO2)). The interval 272 to 319 (NIISPMEDSPIPDMSGKESGADGASTSPRNQNKPFSVPHTKSLESRIK) is disordered. 2 positions are modified to phosphoserine: Ser280 and Ser298. Residues 295-305 (ASTSPRNQNKP) show a composition bias toward polar residues. A coiled-coil region spans residues 367 to 407 (LLRLAKEEVSRQELRQRVRMADNEVMDAFRKIMAARQKKRT). The residue at position 418 (Lys418) is an N6-acetyllysine.

It belongs to the NGG1 family. In terms of assembly, the PCAF complex is composed of a number of TBP-associated factors (TAFS), such as TAF5, TAF5L, TAF6, TAF6L, TAF9, TAF10 and TAF12, PCAF, and also PCAF-associated factors (PAFs), such as TADA2L/ADA2, TADA3L/ADA3 and SPT3. Interacts directly with TADA2L and PCAF and also with the high-risk HPV oncoprotein E6. Component of the STAGA transcription coactivator-HAT complex, at least composed of SUPT3H, GCN5L2, TAF5L, TAF6L, SUPT7L, TADA3L, TAD1L, TAF10, TAF12, TRRAP and TAF9. Component of the TFTC-HAT complex. Component of the ADA2A-containing complex (ATAC), composed of KAT14, KAT2A, TADA2L, TADA3L, ZZ3, MBIP, WDR5, YEATS2, CCDC101 and DR1. Ubiquitously expressed.

The protein localises to the nucleus. In terms of biological role, functions as a component of the PCAF complex. The PCAF complex is capable of efficiently acetylating histones in a nucleosomal context. The PCAF complex could be considered as the human version of the yeast SAGA complex. Also known as a coactivator for p53/TP53-dependent transcriptional activation. Component of the ATAC complex, a complex with histone acetyltransferase activity on histones H3 and H4. In Homo sapiens (Human), this protein is Transcriptional adapter 3 (TADA3).